The primary structure comprises 863 residues: Leucine--tRNA ligase (863 aa).

Residues 40–51 carry the 'HIGH' region motif; that stretch reads PYPSGAGLHVGH. The short motif at 635–639 is the 'KMSKS' region element; it reads KMSKS. ATP is bound at residue lysine 638.

This sequence belongs to the class-I aminoacyl-tRNA synthetase family.

It is found in the cytoplasm. The catalysed reaction is tRNA(Leu) + L-leucine + ATP = L-leucyl-tRNA(Leu) + AMP + diphosphate. The protein is Leucine--tRNA ligase of Leptospira interrogans serogroup Icterohaemorrhagiae serovar copenhageni (strain Fiocruz L1-130).